The chain runs to 100 residues: MAFLLNNASISSHLRSSSSQKTGDALSISRRGFHIEPGTREKALLAEDSALKRFKSHKKSVHKLKRIGDVLTVVVVAGCCYEIYVKAVMKKEALAAGKSS.

A disordered region spans residues 1–25; that stretch reads MAFLLNNASISSHLRSSSSQKTGDA. The transit peptide at 1-32 directs the protein to the mitochondrion; it reads MAFLLNNASISSHLRSSSSQKTGDALSISRRG. The span at 9-19 shows a compositional bias: low complexity; the sequence is SISSHLRSSSS.

In terms of assembly, component of complex II composed of eight subunits in plants: four classical SDH subunits SDH1, SDH2, SDH3 and SDH4 (a flavoprotein (FP), an iron-sulfur protein (IP), and a cytochrome b composed of a large and a small subunit.), as well as four subunits unknown in mitochondria from bacteria and heterotrophic eukaryotes.

It is found in the mitochondrion inner membrane. It functions in the pathway carbohydrate metabolism; tricarboxylic acid cycle. The polypeptide is Succinate dehydrogenase subunit 7B, mitochondrial (Arabidopsis thaliana (Mouse-ear cress)).